A 190-amino-acid chain; its full sequence is dITP/XTP pyrophosphatase (190 aa).

10–15 provides a ligand contact to substrate; sequence TTNKHK. Mg(2+)-binding residues include Glu39 and Asp68. The active-site Proton acceptor is the Asp68. Substrate contacts are provided by residues Ala69, 143–146, Lys166, and 171–172; these read FGYD and HR.

This sequence belongs to the HAM1 NTPase family. In terms of assembly, homodimer. Mg(2+) is required as a cofactor.

It carries out the reaction XTP + H2O = XMP + diphosphate + H(+). The enzyme catalyses dITP + H2O = dIMP + diphosphate + H(+). The catalysed reaction is ITP + H2O = IMP + diphosphate + H(+). Its function is as follows. Pyrophosphatase that catalyzes the hydrolysis of nucleoside triphosphates to their monophosphate derivatives, with a high preference for the non-canonical purine nucleotides XTP (xanthosine triphosphate), dITP (deoxyinosine triphosphate) and ITP. Seems to function as a house-cleaning enzyme that removes non-canonical purine nucleotides from the nucleotide pool, thus preventing their incorporation into DNA/RNA and avoiding chromosomal lesions. The protein is dITP/XTP pyrophosphatase of Hyperthermus butylicus (strain DSM 5456 / JCM 9403 / PLM1-5).